We begin with the raw amino-acid sequence, 106 residues long: MTYVIAEPCVDVLDKACIEECPVDCIYEGGRMLYIHPDECVDCGACEPVCPVEAIYYEDDVPDEWAAYTKANVDFFDELGSPGGAAKVGKVDRDVEPVSSLPPQGE.

The [3Fe-4S] cluster site is built by Cys-9 and Cys-17. Positions 21, 40, 43, and 46 each coordinate [4Fe-4S] cluster. The 4Fe-4S ferredoxin-type domain occupies 31 to 60 (RMLYIHPDECVDCGACEPVCPVEAIYYEDD). Cys-50 contacts [3Fe-4S] cluster. A disordered region spans residues 84–106 (GAAKVGKVDRDVEPVSSLPPQGE).

It depends on [4Fe-4S] cluster as a cofactor. The cofactor is [3Fe-4S] cluster.

Ferredoxins are iron-sulfur proteins that transfer electrons in a wide variety of metabolic reactions. In Saccharopolyspora erythraea (Streptomyces erythraeus), this protein is Ferredoxin (fdxA).